We begin with the raw amino-acid sequence, 101 residues long: Large ribosomal subunit protein bL27 (101 aa).

A propeptide spanning residues 1–9 (MLLMNLQLF) is cleaved from the precursor.

Belongs to the bacterial ribosomal protein bL27 family. In terms of processing, the N-terminus is cleaved by ribosomal processing cysteine protease Prp.

The sequence is that of Large ribosomal subunit protein bL27 from Clostridium tetani (strain Massachusetts / E88).